The primary structure comprises 1409 residues: MAP kinase-activating death domain protein (1409 aa).

A uDENN domain is found at 26–230 (RGASQSSPDA…VPVPGKTKVQ (205 aa)). The 140-residue stretch at 251 to 390 (RFTLIDFPLH…DATHLKERLK (140 aa)) folds into the cDENN domain. In terms of domain architecture, dDENN spans 392-496 (AINKMTTMTV…ECCLCPKNET (105 aa)). 4 disordered regions span residues 654–701 (SFDH…MKGL), 761–784 (QHIV…QSKN), 902–1008 (SSSA…KVKT), and 1015–1034 (PQNL…SFLA). 2 stretches are compositionally biased toward polar residues: residues 680–691 (SDASDTPTSRGS) and 761–772 (QHIVRSKTQPNP). Low complexity-rich tracts occupy residues 773–784 (TSQQTANQQSKN) and 902–913 (SSSAPSTMTTPS). Residues 915–925 (HSNDILKESRP) show a composition bias toward basic and acidic residues. Polar residues predominate over residues 941–961 (LGQNVTPTSTNNHEIAQSTRS). The segment covering 963-1003 (ALPPPVPPREAPPIPKRNPPPLGAPPKVPEGARAPPPLPPR) has biased composition (pro residues). Positions 1020-1031 (PNNQPAQPSSPS) are enriched in low complexity. In terms of domain architecture, Death spans 1109 to 1184 (GMDQEPSEMI…GLVCSKEINK (76 aa)).

This sequence belongs to the MADD family. As to quaternary structure, interacts with cab-1. Expressed in nearly all neurons.

The protein resides in the cell membrane. Its subcellular location is the cytoplasm. Functionally, guanyl-nucleotide exchange factor that regulates small GTPases. Converts GDP-bound inactive form of rab-3 and cab-1 to the GTP-bound active forms. Regulator of presynaptic activity that interacts with rab-3 to regulate synaptic vesicle release. Is also a regulator of the cab-1 synaptic transmission pathway. Probably by converting rab-3 to its GTP-bound active form, plays a role in the recruitment of endophilin unc-57 to synaptic vesicles. Probably by activating rab-3 and thus regulating the trafficking of dense-core vesicles, plays a role in AVG neuron-mediated formation of the right axon tract of the ventral nerve cord. Regulates anterior body muscle contractions (aBOC) and the expulsion steps during the defecation motor program (DMP). Probably by regulating DMP, required for fatty acid uptake by intestinal cells. This is MAP kinase-activating death domain protein (aex-3) from Caenorhabditis elegans.